The primary structure comprises 314 residues: Inactive chitinase-like protein 1 (314 aa).

An N-terminal signal peptide occupies residues 1–19 (MKEIVRALEGYGPPKDKAA). Residues 20 to 60 (EQCGWQAGGALCPGGLCCSQYGWCANTPEYCGSGCQSQCDG) form the Chitin-binding type-1 domain. 7 cysteine pairs are disulfide-bonded: Cys22/Cys37, Cys31/Cys43, Cys36/Cys50, Cys54/Cys58, Cys92/Cys154, Cys166/Cys174, and Cys273/Cys305.

This sequence belongs to the glycosyl hydrolase 19 family. Chitinase class I subfamily.

Its function is as follows. Inactive chitinase-like protein that does not exhibit hydrolytic activity toward chitin. Binds strongly to chitin and possesses antifungal activity toward the fungal pathogen Altenaria alternata in plate assays. Inhibits the growth of Fusarium oxysporum on plate assays. Probably involved in defense against fungal pathogens through a mechanism that only involves carbohydrate binding. The protein is Inactive chitinase-like protein 1 of Hevea brasiliensis (Para rubber tree).